The sequence spans 295 residues: 4-diphosphocytidyl-2-C-methyl-D-erythritol kinase (295 aa).

Residue Lys22 is part of the active site. 106–116 (PAGGGFGGGSS) is an ATP binding site. Asp148 is a catalytic residue.

The protein belongs to the GHMP kinase family. IspE subfamily.

The catalysed reaction is 4-CDP-2-C-methyl-D-erythritol + ATP = 4-CDP-2-C-methyl-D-erythritol 2-phosphate + ADP + H(+). Its pathway is isoprenoid biosynthesis; isopentenyl diphosphate biosynthesis via DXP pathway; isopentenyl diphosphate from 1-deoxy-D-xylulose 5-phosphate: step 3/6. Functionally, catalyzes the phosphorylation of the position 2 hydroxy group of 4-diphosphocytidyl-2C-methyl-D-erythritol. The chain is 4-diphosphocytidyl-2-C-methyl-D-erythritol kinase from Xanthomonas oryzae pv. oryzae (strain MAFF 311018).